We begin with the raw amino-acid sequence, 86 residues long: Immunity protein CdiI-1 (86 aa).

Interacts with the C-terminal fragment (CT) of cognate toxin protein CdiA-EC869.

Immunity protein component of a toxin-immunity protein module, which functions as a cellular contact-dependent growth inhibition (CDI) system. CDI modules allow bacteria to communicate with and inhibit the growth of closely related neighboring bacteria in a contact-dependent fashion. Neutralizes the toxic activity of cognate toxin CdiA-EC869 (the C-terminal 289 residue CT fragment). Does not inhibit toxic activity of CdiA from other toxin-immunity modules or strains of E.coli. The polypeptide is Immunity protein CdiI-1 (Escherichia coli O157:H7 (strain EC869)).